We begin with the raw amino-acid sequence, 325 residues long: Ribose-phosphate pyrophosphokinase 4 (325 aa).

Residues aspartate 145 and histidine 147 each coordinate Mg(2+). The binding of phosphoribosylpyrophosphate stretch occupies residues 228–243; it reads GRHVVIVDDLVQSGGT.

This sequence belongs to the ribose-phosphate pyrophosphokinase family. It depends on Mg(2+) as a cofactor.

It carries out the reaction D-ribose 5-phosphate + ATP = 5-phospho-alpha-D-ribose 1-diphosphate + AMP + H(+). The sequence is that of Ribose-phosphate pyrophosphokinase 4 from Oryza sativa subsp. japonica (Rice).